Here is a 248-residue protein sequence, read N- to C-terminus: 2,3-bisphosphoglycerate-dependent phosphoglycerate mutase (248 aa).

Substrate is bound by residues 8 to 15 (RHGESTWN), 21 to 22 (TG), R60, 87 to 90 (ERHY), K98, 114 to 115 (RR), and 183 to 184 (GN). Residue H9 is the Tele-phosphohistidine intermediate of the active site. The active-site Proton donor/acceptor is E87.

Belongs to the phosphoglycerate mutase family. BPG-dependent PGAM subfamily. Homodimer.

It carries out the reaction (2R)-2-phosphoglycerate = (2R)-3-phosphoglycerate. It participates in carbohydrate degradation; glycolysis; pyruvate from D-glyceraldehyde 3-phosphate: step 3/5. Functionally, catalyzes the interconversion of 2-phosphoglycerate and 3-phosphoglycerate. The protein is 2,3-bisphosphoglycerate-dependent phosphoglycerate mutase of Burkholderia orbicola (strain MC0-3).